The sequence spans 451 residues: uncharacterized protein (451 aa).

The disordered stretch occupies residues 1–451 (MSETENKTTT…KKEAAKNKSK (451 aa)). The segment covering 9–22 (TTETPTTTDSTVTT) has biased composition (low complexity). The span at 44–54 (VKNQLSNTRTR) shows a compositional bias: polar residues. The span at 73-99 (KLIDTKERKEKKEKKEKEPKEPKEPKE) shows a compositional bias: basic and acidic residues. The span at 114–147 (GDEEEDEEKEEDEEQKEEQSQEEDSEESEEEQNS) shows a compositional bias: acidic residues. The segment covering 152–162 (KKKKKQAKKVA) has biased composition (basic residues). Basic and acidic residues-rich tracts occupy residues 163-192 (KKETEPKKKEAKPKKEAKPKKETTKKEKEA), 199-210 (STEKKEKEEKPK), and 217-230 (KKDQAAAEKKKDGD). Positions 232 to 244 (STTTTATATTTTD) are enriched in low complexity. 2 stretches are compositionally biased toward basic and acidic residues: residues 284 to 303 (TEEKKDEEKSEEKEKKETKK) and 311 to 340 (AAAEKKKTAANPTDKKDGENKDVTPSDDKP). Residues 341 to 355 (AATTTTTTAAAATTT) show a composition bias toward low complexity. A compositionally biased stretch (basic and acidic residues) spans 356–383 (EEPKEKITKPAADKKKAPANKKAEKDQS). A compositionally biased stretch (low complexity) spans 393–425 (TTTATTTTTNKDATAPTTTTNKDATAPTTTTTK). Residues 441-451 (PKKEAAKNKSK) show a composition bias toward basic and acidic residues.

This is an uncharacterized protein from Dictyostelium discoideum (Social amoeba).